Reading from the N-terminus, the 264-residue chain is Teichoic acids export ATP-binding protein TagH (264 aa).

Residues 24–243 enclose the ABC transporter domain; the sequence is IKDALIPKNK…YEAFLKTFKK (220 aa). 57–64 lines the ATP pocket; it reads GINGSGKS.

This sequence belongs to the ABC transporter superfamily. Teichoic acids exporter (TC 3.A.1.104.1) family. The complex is composed of two ATP-binding proteins (TagH) and two transmembrane proteins (TagG).

It is found in the cell membrane. It carries out the reaction ATP + H2O + teichoic acidSide 1 = ADP + phosphate + teichoic acidSide 2.. Its function is as follows. Part of the ABC transporter complex TagGH involved in teichoic acids export. Responsible for energy coupling to the transport system. In Staphylococcus epidermidis (strain ATCC 35984 / DSM 28319 / BCRC 17069 / CCUG 31568 / BM 3577 / RP62A), this protein is Teichoic acids export ATP-binding protein TagH.